The chain runs to 100 residues: MQLTPREKDKLLISMAAEVARKRLARGVKLNHPEAIALITDAVVEGARDGRSVADMMEAGAQVITRDQCMEGVPEMIHDVQVEATFPDGTKLVTVHNPIR.

It belongs to the urease gamma subunit family. Heterotrimer of UreA (gamma), UreB (beta) and UreC (alpha) subunits. Three heterotrimers associate to form the active enzyme.

The protein localises to the cytoplasm. The catalysed reaction is urea + 2 H2O + H(+) = hydrogencarbonate + 2 NH4(+). The protein operates within nitrogen metabolism; urea degradation; CO(2) and NH(3) from urea (urease route): step 1/1. This chain is Urease subunit gamma, found in Roseobacter denitrificans (strain ATCC 33942 / OCh 114) (Erythrobacter sp. (strain OCh 114)).